Reading from the N-terminus, the 181-residue chain is Prepronociceptin (181 aa).

A signal peptide spans 1-19 (MKILFCDVLLLSLLSSVFS). A propeptide spanning residues 20-95 (SCPEDCLTCQ…QSKASEMQHL (76 aa)) is cleaved from the precursor. The interval 103–125 (SVVQARDAEPEADAEPVADEADE) is disordered. 2 repeat units span residues 109–114 (DAEPEA) and 115–120 (DAEPVA). The 2 X 6 AA tandem repeats of D-A-E-P-X-A stretch occupies residues 109–120 (DAEPEADAEPVA). The segment covering 112 to 125 (PEADAEPVADEADE) has biased composition (acidic residues). Residues 174–181 (TLHQNGNV) constitute a propeptide that is removed on maturation.

The protein belongs to the opioid neuropeptide precursor family. Post-translationally, specific enzymatic cleavages at paired basic residues probably yield other active peptides besides nociceptin. In terms of processing, the N-terminal domain contains 6 conserved cysteines thought to be involved in disulfide bonding and/or processing. In terms of tissue distribution, expressed predominantly in the spinal cord and brain, being more abundant in the hypothalamus and striatum. Also found in small amounts in ovary.

The protein localises to the secreted. In terms of biological role, ligand of the opioid receptor-like receptor OPRL1. It may act as a transmitter in the brain by modulating nociceptive and locomotor behavior. May be involved in neuronal differentiation and development. Blocks nociceptin action in pain transmission by inhibiting nociceptin-induced hyperalgesia and allodynia. Functionally, has potent analgesic activity. The polypeptide is Prepronociceptin (Pnoc) (Rattus norvegicus (Rat)).